We begin with the raw amino-acid sequence, 454 residues long: uncharacterized protein (454 aa).

Residues 1–45 (MAAEGKAIAKVNDLVIFVPYVVPGDVVDLQIKRKKNKYAEAEAVK) form the TRAM domain. Cys-58, Cys-64, Cys-67, and Cys-160 together coordinate [4Fe-4S] cluster. Positions 286, 315, 336, and 385 each coordinate S-adenosyl-L-methionine. Cys-412 acts as the Nucleophile in catalysis.

Belongs to the class I-like SAM-binding methyltransferase superfamily. RNA M5U methyltransferase family.

This is an uncharacterized protein from Bacteroides thetaiotaomicron (strain ATCC 29148 / DSM 2079 / JCM 5827 / CCUG 10774 / NCTC 10582 / VPI-5482 / E50).